A 653-amino-acid polypeptide reads, in one-letter code: Sulfate transporter 1.2 (653 aa).

Residues 1–30 (MSSRAHPVDGSPATDGGHVPMKPSPTRHKV) form a disordered region. The Cytoplasmic portion of the chain corresponds to 1–91 (MSSRAHPVDG…GRNYTFKKFR (91 aa)). The helical transmembrane segment at 92–112 (GDLISGLTIASLCIPQDIGYA) threads the bilayer. The Extracellular portion of the chain corresponds to 113 to 116 (KLAN). Residues 117–137 (LDPKYGLYSSFVPPLVYACMG) form a helical membrane-spanning segment. Topologically, residues 138 to 141 (SSRD) are cytoplasmic. The helical transmembrane segment at 142-162 (IAIGPVAVVSLLLGTLLRAEI) threads the bilayer. Residues 163-173 (DPNTSPDEYLR) are Extracellular-facing. Transmembrane regions (helical) follow at residues 174 to 194 (LAFT…FFRL) and 195 to 215 (GFLI…GAAI). At 216-253 (TIALQQLKGFLGIKKFTKKTDIISVLESVFKAAHHGWN) the chain is on the extracellular side. Residues 254–274 (WQTILIGASFLTFLLTSKIIG) form a helical membrane-spanning segment. Residues 275–280 (KKSKKL) are Cytoplasmic-facing. A helical transmembrane segment spans residues 281–301 (FWVPAIAPLISVIVSTFFVYI). Residues 302–339 (TRADKQGVQIVKHLDQGINPSSFHLIYFTGDNLAKGIR) are Extracellular-facing. Residues 340–360 (IGVVAGMVALTEAVAIGRTFA) form a helical membrane-spanning segment. Residues 361–372 (AMKDYQIDGNKE) lie on the Cytoplasmic side of the membrane. A helical membrane pass occupies residues 373–393 (MVALGMMNVVGSMSSCYVATG). Residues 394-409 (SFSRSAVNFMAGCQTA) are Extracellular-facing. Residues 410–430 (VSNIIMSIVVLLTLLFLTPLF) traverse the membrane as a helical segment. Residues 431–438 (KYTPNAIL) are Cytoplasmic-facing. The chain crosses the membrane as a helical span at residues 439-459 (AAIIINAVIPLIDIQAAILIF). At 460-466 (KVDKLDF) the chain is on the extracellular side. Residues 467–487 (IACIGAFFGVIFVSVEIGLLI) traverse the membrane as a helical segment. The Cytoplasmic portion of the chain corresponds to 488 to 653 (AVSISFAKIL…ACCPKLSNEV (166 aa)). The STAS domain occupies 522–645 (QYPEATMVPG…LTVADAVEAC (124 aa)).

This sequence belongs to the SLC26A/SulP transporter (TC 2.A.53.1) family. As to quaternary structure, homodimer. Interacts with OASA1 through its STAS domain. In terms of tissue distribution, expressed in lateral root cap, root hairs, epidermal and cortical cells of roots.

It is found in the cell membrane. Its activity is regulated as follows. Interaction with OASA1 negatively impacts the transporter activity. In terms of biological role, high-affinity H(+)/sulfate cotransporter that mediates the uptake of the environmental sulfate by plant roots. Plays a central role in the regulation of sulfate assimilation. Unable to transport molybdate. The sequence is that of Sulfate transporter 1.2 (SULTR1;2) from Arabidopsis thaliana (Mouse-ear cress).